Reading from the N-terminus, the 498-residue chain is Lipase 3 (498 aa).

A disulfide bridge connects residues cysteine 60 and cysteine 91. The N-linked (GlcNAc...) asparagine glycan is linked to asparagine 193. The active-site Acyl-ester intermediate is serine 200. Asparagine 384 carries N-linked (GlcNAc...) asparagine glycosylation. Catalysis depends on histidine 409, which acts as the Charge relay system. N-linked (GlcNAc...) asparagine glycosylation occurs at asparagine 418.

The protein belongs to the type-B carboxylesterase/lipase family.

It catalyses the reaction a triacylglycerol + H2O = a diacylglycerol + a fatty acid + H(+). This Yarrowia lipolytica (strain CLIB 122 / E 150) (Yeast) protein is Lipase 3 (LIP3).